Consider the following 360-residue polypeptide: MITQRQNAILNLIVEMFTRTHEPVCSKALQDSIDSSSATIRNDMAKLEKMGYLEKAHISSGRMPSRAGFQYFVANSLNLDTIDEQDVYQVVKAFDFEAFKLEDILDAAAKLLAEMTGCTAVIQDVEPTKQRLTGFEIVQLSNHDALAVLTLDESKPVTVQFAIPKNFLSSDLEIFHKLVQGRFLGNTVLDIHYRLRTETPQIVQKYFKITDNVLDLFDYIFSHLFKELIFIEGKVASLAYADLKTYQFLDNPQHVALALRSAISDDEVTKISVAESTEEALENVTVMSHKFLIPYRGTALMHVIGPIEMDYRRMVSLVNVISRVLVMKLTDYYRYLNSNHYEVFLSRNVLKNIERGECLD.

Belongs to the HrcA family.

In terms of biological role, negative regulator of class I heat shock genes (grpE-dnaK-dnaJ and groELS operons). Prevents heat-shock induction of these operons. The chain is Heat-inducible transcription repressor HrcA from Streptococcus thermophilus (strain CNRZ 1066).